A 220-amino-acid polypeptide reads, in one-letter code: Avenin-3 (220 aa).

The first 19 residues, 1-19 (MKTFLIFALLAMAATMATA), serve as a signal peptide directing secretion. Glutamine 20 is modified (pyrrolidone carboxylic acid). Tandem repeats lie at residues 41–48 (QQMLLQQQ) and 49–56 (QQMLLQQQ). The interval 41-56 (QQMLLQQQQQMLLQQQ) is 2 X 8 AA tandem repeats of Q-Q-M-L-L-Q-Q-Q. Cystine bridges form between cysteine 69-cysteine 202, cysteine 77-cysteine 96, cysteine 103-cysteine 104, and cysteine 116-cysteine 210. The stretch at 128–137 (MQQQQFFQPQ) is one 2-1 repeat. Residues 128–146 (MQQQQFFQPQMQQQFFQPQ) form a 2 X 10 AA tandem repeats of M-Q-Q-Q-Q-F-F-Q-P-Q region. The stretch at 138-146 (MQQQFFQPQ) is one 2-2; approximate repeat.

It belongs to the gliadin/glutenin family. As to quaternary structure, monomer.

The protein localises to the vacuole. Its function is as follows. Seed storage protein. Serves as a source of nitrogen, carbon, and sulfur for the young developing seedling. This is Avenin-3 from Avena sativa (Oat).